Here is a 286-residue protein sequence, read N- to C-terminus: Probable alpha-ketoglutarate-dependent hypophosphite dioxygenase (286 aa).

Belongs to the PhyH family.

Required for hypophosphite oxidation. This chain is Probable alpha-ketoglutarate-dependent hypophosphite dioxygenase (htxA), found in Stutzerimonas stutzeri (Pseudomonas stutzeri).